We begin with the raw amino-acid sequence, 302 residues long: Probable alpha-L-glutamate ligase (302 aa).

One can recognise an ATP-grasp domain in the interval 104 to 287 (LQLLSRKGLG…IAGQIIEYIE (184 aa)). ATP-binding positions include Lys141, 178–179 (EY), Asp187, and 211–213 (RSN). The Mg(2+) site is built by Asp248, Glu260, and Asn262. Residues Asp248, Glu260, and Asn262 each coordinate Mn(2+).

This sequence belongs to the RimK family. It depends on Mg(2+) as a cofactor. The cofactor is Mn(2+).

This Chromohalobacter salexigens (strain ATCC BAA-138 / DSM 3043 / CIP 106854 / NCIMB 13768 / 1H11) protein is Probable alpha-L-glutamate ligase.